We begin with the raw amino-acid sequence, 96 residues long: uncharacterized protein (96 aa).

Positions 57-96 constitute a CBS domain; the sequence is MTKKVRTTKKDASISDAAALMDKHNVNRLPVVDENNKLVL.

This is an uncharacterized protein from Methanobacterium ivanovii.